Here is a 144-residue protein sequence, read N- to C-terminus: Protein archease (144 aa).

Asp14, Asp143, and Ile144 together coordinate Ca(2+).

Belongs to the archease family.

Functionally, activates the tRNA-splicing ligase complex by facilitating the enzymatic turnover of catalytic subunit RtcB. Acts by promoting the guanylylation of RtcB, a key intermediate step in tRNA ligation. Can also alter the NTP specificity of RtcB such that ATP, dGTP or ITP is used efficiently. In Aeropyrum pernix (strain ATCC 700893 / DSM 11879 / JCM 9820 / NBRC 100138 / K1), this protein is Protein archease.